The following is a 233-amino-acid chain: Adenosine 5'-phosphosulfate reductase 1 (233 aa).

4 residues coordinate [4Fe-4S] cluster: Cys120, Cys121, Cys203, and Cys206. Catalysis depends on Cys229, which acts as the Nucleophile; cysteine thiosulfonate intermediate.

It belongs to the PAPS reductase family. CysH subfamily. It depends on [4Fe-4S] cluster as a cofactor.

It localises to the cytoplasm. The catalysed reaction is [thioredoxin]-disulfide + sulfite + AMP + 2 H(+) = adenosine 5'-phosphosulfate + [thioredoxin]-dithiol. Its pathway is sulfur metabolism; hydrogen sulfide biosynthesis; sulfite from sulfate. Catalyzes the formation of sulfite from adenosine 5'-phosphosulfate (APS) using thioredoxin as an electron donor. The polypeptide is Adenosine 5'-phosphosulfate reductase 1 (cysH) (Bacillus subtilis (strain 168)).